Here is a 45-residue protein sequence, read N- to C-terminus: Large ribosomal subunit protein bL34 (45 aa).

This sequence belongs to the bacterial ribosomal protein bL34 family.

This chain is Large ribosomal subunit protein bL34, found in Leifsonia xyli subsp. xyli (strain CTCB07).